The chain runs to 578 residues: SCARECROW-LIKE protein 7 (578 aa).

The span at Val18 to Gln29 shows a compositional bias: low complexity. Disordered regions lie at residues Val18 to Gly84 and Pro146 to Pro173. Over residues Pro49–Gln61 the composition is skewed to basic residues. A compositionally biased stretch (low complexity) spans Gln62–His74. Residues Pro146–Thr156 show a composition bias toward pro residues. Residues His157–Pro173 show a composition bias toward low complexity. A GRAS domain is found at Ser198 to Arg578. Residues Ala205 to Ala264 form a leucine repeat I (LRI) region. The segment at Tyr283–Gly349 is VHIID. The short motif at Ile314–Asp318 is the VHIID element. The interval Ala365–Asp397 is leucine repeat II (LRII). A PFYRE region spans residues Val406–Arg497. The LXXLL motif signature appears at Leu414 to Leu418. The tract at residues Gly500 to Arg578 is SAW.

It belongs to the GRAS family. Homodimer.

The protein resides in the nucleus. Functionally, probable transcription factor involved in plant development. Involved in environmental abiotic stress resistance. May increase the expression of stress-responsive genes. Binds DNA in vitro. This chain is SCARECROW-LIKE protein 7, found in Oryza sativa subsp. japonica (Rice).